Consider the following 63-residue polypeptide: Beta-insect depressant toxin Im-3 (63 aa).

In terms of domain architecture, LCN-type CS-alpha/beta spans 1–63 (KEGYGVGKDG…KVWESSTNTC (63 aa)). 4 disulfides stabilise this stretch: Cys11/Cys63, Cys15/Cys37, Cys22/Cys44, and Cys26/Cys46.

It belongs to the long (4 C-C) scorpion toxin superfamily. Sodium channel inhibitor family. Beta subfamily. As to expression, expressed by the venom gland.

The protein resides in the secreted. Beta toxins bind voltage-independently at site-4 of sodium channels (Nav) and shift the voltage of activation toward more negative potentials thereby affecting sodium channel activation and promoting spontaneous and repetitive firing. Induces paralysis in cricket A.domestica but does not induce death. This chain is Beta-insect depressant toxin Im-3, found in Isometrus maculatus (Lesser brown scorpion).